The sequence spans 99 residues: DNA-binding protein HmvA (99 aa).

Positions 52 to 55 are interaction with DNA; the sequence is KTIK.

Belongs to the archaeal histone HMF family. Homodimer or heterodimer with another histone. Dimers then assemble into higher oligomers, with the DNA wrapped around the protein core.

The protein resides in the cytoplasm. It is found in the chromosome. Its function is as follows. Binds and compact DNA (95 to 150 base pairs) to form nucleosome-like structures that contain positive DNA supercoils. Increases the resistance of DNA to thermal denaturation (in vitro). This Methanococcus voltae protein is DNA-binding protein HmvA (hmvA).